Consider the following 366-residue polypeptide: 5-amino-6-(D-ribitylamino)uracil--L-tyrosine 4-hydroxyphenyl transferase (366 aa).

The region spanning arginine 51 to aspartate 290 is the Radical SAM core domain. The [4Fe-4S] cluster site is built by cysteine 70, cysteine 74, and cysteine 77.

Belongs to the radical SAM superfamily. CofH family. As to quaternary structure, consists of two subunits, CofG and CofH. [4Fe-4S] cluster serves as cofactor.

The catalysed reaction is 5-amino-6-(D-ribitylamino)uracil + L-tyrosine + S-adenosyl-L-methionine = 5-amino-5-(4-hydroxybenzyl)-6-(D-ribitylimino)-5,6-dihydrouracil + 2-iminoacetate + 5'-deoxyadenosine + L-methionine + H(+). The protein operates within cofactor biosynthesis; coenzyme F0 biosynthesis. In terms of biological role, catalyzes the radical-mediated synthesis of 5-amino-5-(4-hydroxybenzyl)-6-(D-ribitylimino)-5,6-dihydrouracil from 5-amino-6-(D-ribitylamino)uracil and L-tyrosine. This chain is 5-amino-6-(D-ribitylamino)uracil--L-tyrosine 4-hydroxyphenyl transferase, found in Methanospirillum hungatei JF-1 (strain ATCC 27890 / DSM 864 / NBRC 100397 / JF-1).